We begin with the raw amino-acid sequence, 334 residues long: GTPase Obg (334 aa).

The 159-residue stretch at 1–159 (MRFVDEVVIK…KEVRLELNLL (159 aa)) folds into the Obg domain. The OBG-type G domain occupies 160–331 (ADVALLGLPN…LAKKLNEFLQ (172 aa)). GTP is bound by residues 166–173 (GLPNAGKS), 191–195 (FTTMY), 212–215 (DIPG), 282–285 (NKID), and 312–314 (SAA). Residues serine 173 and threonine 193 each coordinate Mg(2+).

It belongs to the TRAFAC class OBG-HflX-like GTPase superfamily. OBG GTPase family. As to quaternary structure, monomer. Mg(2+) serves as cofactor.

The protein localises to the cytoplasm. Functionally, an essential GTPase which binds GTP, GDP and possibly (p)ppGpp with moderate affinity, with high nucleotide exchange rates and a fairly low GTP hydrolysis rate. Plays a role in control of the cell cycle, stress response, ribosome biogenesis and in those bacteria that undergo differentiation, in morphogenesis control. The polypeptide is GTPase Obg (Francisella tularensis subsp. tularensis (strain FSC 198)).